The chain runs to 473 residues: Serine palmitoyltransferase 1 (473 aa).

The Lumenal portion of the chain corresponds to Met1 to Gln15. An interaction with SPTLC2 region spans residues Met1 to Pro66. A helical membrane pass occupies residues Ala16–Ile36. At Arg37–Leu473 the chain is on the cytoplasmic side. At Tyr164 the chain carries Phosphotyrosine; by ABL.

Belongs to the class-II pyridoxal-phosphate-dependent aminotransferase family. As to quaternary structure, component of the serine palmitoyltransferase (SPT) complex, which is also composed of SPTLC2 or SPTLC3 and SPTSSA or SPTSSB. The heterodimer with SPTLC2 or SPTLC3 forms the catalytic core of the enzyme, while SPTSSA or SPTSSB subunits determine substrate specificity. SPT also interacts with ORMDL proteins, especially ORMDL3, which negatively regulate SPT activity in the presence of ceramides. Forms dimers of heterodimers with SPTLC2. Interacts with RTN4 (isoform B). Pyridoxal 5'-phosphate is required as a cofactor. In terms of processing, phosphorylation at Tyr-164 inhibits activity and promotes cell survival. As to expression, expressed in a variety of tissues. Highest expression in brain, kidney and liver. Expressed in brown and white adipose tissues.

Its subcellular location is the endoplasmic reticulum membrane. The catalysed reaction is L-serine + hexadecanoyl-CoA + H(+) = 3-oxosphinganine + CO2 + CoA. It catalyses the reaction octadecanoyl-CoA + L-serine + H(+) = 3-oxoeicosasphinganine + CO2 + CoA. The enzyme catalyses tetradecanoyl-CoA + L-serine + H(+) = 3-oxohexadecasphinganine + CO2 + CoA. It carries out the reaction dodecanoyl-CoA + L-serine + H(+) = 3-oxotetradecasphinganine + CO2 + CoA. The protein operates within lipid metabolism; sphingolipid metabolism. SPT complex catalytic activity is negatively regulated by ORMDL proteins, including ORMDL3, in the presence of ceramides. This mechanism allows to maintain ceramide levels at sufficient concentrations for the production of complex sphingolipids, but which prevents the accumulation of ceramides to levels that trigger apoptosis. Its function is as follows. Component of the serine palmitoyltransferase multisubunit enzyme (SPT) that catalyzes the initial and rate-limiting step in sphingolipid biosynthesis by condensing L-serine and activated acyl-CoA (most commonly palmitoyl-CoA) to form long-chain bases. The SPT complex is also composed of SPTLC2 or SPTLC3 and SPTSSA or SPTSSB. Within this complex, the heterodimer with SPTLC2 or SPTLC3 forms the catalytic core. The composition of the serine palmitoyltransferase (SPT) complex determines the substrate preference. The SPTLC1-SPTLC2-SPTSSA complex shows a strong preference for C16-CoA substrate, while the SPTLC1-SPTLC3-SPTSSA isozyme uses both C14-CoA and C16-CoA as substrates, with a slight preference for C14-CoA. The SPTLC1-SPTLC2-SPTSSB complex shows a strong preference for C18-CoA substrate, while the SPTLC1-SPTLC3-SPTSSB isozyme displays an ability to use a broader range of acyl-CoAs, without apparent preference. Required for adipocyte cell viability and metabolic homeostasis. In Mus musculus (Mouse), this protein is Serine palmitoyltransferase 1 (Sptlc1).